Here is a 308-residue protein sequence, read N- to C-terminus: Transcription initiation factor IIB (308 aa).

A run of 2 repeats spans residues 124 to 207 (NELE…LREL) and 218 to 299 (DYVT…ELTQ).

It belongs to the TFIIB family.

Stabilizes TBP binding to an archaeal box-A promoter. Also responsible for recruiting RNA polymerase II to the pre-initiation complex (DNA-TBP-TFIIB). In Sulfurisphaera tokodaii (strain DSM 16993 / JCM 10545 / NBRC 100140 / 7) (Sulfolobus tokodaii), this protein is Transcription initiation factor IIB.